We begin with the raw amino-acid sequence, 56 residues long: Large ribosomal subunit protein bL33 (56 aa).

This sequence belongs to the bacterial ribosomal protein bL33 family.

The sequence is that of Large ribosomal subunit protein bL33 from Ehrlichia ruminantium (strain Gardel).